Here is a 268-residue protein sequence, read N- to C-terminus: Tryptophan synthase alpha chain (268 aa).

Catalysis depends on proton acceptor residues Glu-49 and Asp-60.

It belongs to the TrpA family. Tetramer of two alpha and two beta chains.

The catalysed reaction is (1S,2R)-1-C-(indol-3-yl)glycerol 3-phosphate + L-serine = D-glyceraldehyde 3-phosphate + L-tryptophan + H2O. It participates in amino-acid biosynthesis; L-tryptophan biosynthesis; L-tryptophan from chorismate: step 5/5. Its function is as follows. The alpha subunit is responsible for the aldol cleavage of indoleglycerol phosphate to indole and glyceraldehyde 3-phosphate. In Vibrio parahaemolyticus serotype O3:K6 (strain RIMD 2210633), this protein is Tryptophan synthase alpha chain.